We begin with the raw amino-acid sequence, 82 residues long: Small ribosomal subunit protein uS17 (82 aa).

This sequence belongs to the universal ribosomal protein uS17 family. As to quaternary structure, part of the 30S ribosomal subunit.

One of the primary rRNA binding proteins, it binds specifically to the 5'-end of 16S ribosomal RNA. This Aeromonas hydrophila subsp. hydrophila (strain ATCC 7966 / DSM 30187 / BCRC 13018 / CCUG 14551 / JCM 1027 / KCTC 2358 / NCIMB 9240 / NCTC 8049) protein is Small ribosomal subunit protein uS17.